The following is a 264-amino-acid chain: Endonuclease V (264 aa).

Asp72 and Asp137 together coordinate Mg(2+).

The protein belongs to the endonuclease V family. It depends on Mg(2+) as a cofactor.

Its subcellular location is the cytoplasm. The catalysed reaction is Endonucleolytic cleavage at apurinic or apyrimidinic sites to products with a 5'-phosphate.. DNA repair enzyme involved in the repair of deaminated bases. Selectively cleaves double-stranded DNA at the second phosphodiester bond 3' to a deoxyinosine leaving behind the intact lesion on the nicked DNA. This chain is Endonuclease V, found in Halobacterium salinarum (strain ATCC 700922 / JCM 11081 / NRC-1) (Halobacterium halobium).